The chain runs to 164 residues: Protein-export protein SecB (164 aa).

This sequence belongs to the SecB family. As to quaternary structure, homotetramer, a dimer of dimers. One homotetramer interacts with 1 SecA dimer.

The protein localises to the cytoplasm. One of the proteins required for the normal export of preproteins out of the cell cytoplasm. It is a molecular chaperone that binds to a subset of precursor proteins, maintaining them in a translocation-competent state. It also specifically binds to its receptor SecA. The chain is Protein-export protein SecB from Nitrosococcus oceani (strain ATCC 19707 / BCRC 17464 / JCM 30415 / NCIMB 11848 / C-107).